Here is a 494-residue protein sequence, read N- to C-terminus: uncharacterized protein (494 aa).

VOC domains lie at 18 to 174 (FIDC…FINR) and 229 to 408 (SLDH…FGIL). Residues histidine 232, histidine 349, and glutamate 460 each contribute to the Fe cation site.

The protein belongs to the 4HPPD family. It depends on Fe cation as a cofactor.

Its function is as follows. May have dioxygenase activity. This is an uncharacterized protein from Dictyostelium discoideum (Social amoeba).